We begin with the raw amino-acid sequence, 252 residues long: Isoprenyl transferase (252 aa).

D32 is an active-site residue. D32 serves as a coordination point for Mg(2+). Substrate-binding positions include 33–36, W37, R45, H49, and 77–79; these read GNGR and STE. N80 acts as the Proton acceptor in catalysis. Residues W81, R83, R200, and 206-208 contribute to the substrate site; that span reads RLS. E219 lines the Mg(2+) pocket.

The protein belongs to the UPP synthase family. In terms of assembly, homodimer. It depends on Mg(2+) as a cofactor.

In terms of biological role, catalyzes the condensation of isopentenyl diphosphate (IPP) with allylic pyrophosphates generating different type of terpenoids. This Listeria monocytogenes serotype 4b (strain F2365) protein is Isoprenyl transferase.